The chain runs to 1113 residues: Translation initiation factor IF-2 (1113 aa).

Composition is skewed to polar residues over residues 56–72 (QSNQSINNKTKQNSSKE), 129–139 (KANTSNQSKGV), 162–187 (LENNASKQNIEDNNNFQERSPRTQLV), and 194–205 (TKNNEPPQQKTS). Disordered regions lie at residues 56–446 (QSNQ…IGEN) and 470–504 (LARPAKPKSTKKSNSKATVVTRKRKKESTRQRQRR). Over residues 248–265 (PVQPRTQNNQNRQRIPNK) the composition is skewed to low complexity. Over residues 415–429 (RRSDWDDAAKLEALR) the composition is skewed to basic and acidic residues. Basic residues-rich tracts occupy residues 474-483 (AKPKSTKKSN) and 490-504 (TRKRKKESTRQRQRR). Positions 605-777 (RRPPVVTVMG…VLLVTEVEDL (173 aa)) constitute a tr-type G domain. The tract at residues 614–621 (GHVDHGKT) is G1. 614–621 (GHVDHGKT) provides a ligand contact to GTP. Residues 639–643 (GITQH) are G2. Residues 664-667 (DTPG) form a G3 region. Residues 664 to 668 (DTPGH) and 718 to 721 (NKID) each bind GTP. Residues 718–721 (NKID) are G4. A G5 region spans residues 754-756 (SAI).

This sequence belongs to the TRAFAC class translation factor GTPase superfamily. Classic translation factor GTPase family. IF-2 subfamily.

It localises to the cytoplasm. In terms of biological role, one of the essential components for the initiation of protein synthesis. Protects formylmethionyl-tRNA from spontaneous hydrolysis and promotes its binding to the 30S ribosomal subunits. Also involved in the hydrolysis of GTP during the formation of the 70S ribosomal complex. This is Translation initiation factor IF-2 from Prochlorococcus marinus (strain MIT 9211).